We begin with the raw amino-acid sequence, 364 residues long: Guanine nucleotide-binding protein alpha-8 subunit (364 aa).

Residue Gly-2 is the site of N-myristoyl glycine attachment. Cys-5 carries S-palmitoyl cysteine lipidation. Residues 38-364 enclose the G-alpha domain; that stretch reads KILKLLILGP…QHTMQKVGIQ (327 aa). A G1 motif region spans residues 41–54; it reads KLLILGPGESGKST. Residues 46-53, 186-192, 211-215, 280-283, and Ala-336 each bind GTP; these read GPGESGKS, LKSRVPT, DVGGQ, and NKID. Mg(2+) is bound by residues Ser-53 and Thr-192. A G2 motif region spans residues 184–192; it reads DILKSRVPT. Positions 207-216 are G3 motif; the sequence is FRIFDVGGQR. The G4 motif stretch occupies residues 276-283; sequence ILFLNKID. The G5 motif stretch occupies residues 334 to 339; the sequence is TCATDT.

The protein belongs to the G-alpha family. In terms of assembly, g proteins are composed of 3 units; alpha, beta and gamma. The alpha chain contains the guanine nucleotide binding site.

Its function is as follows. Guanine nucleotide-binding proteins (G proteins) are involved as modulators or transducers in various transmembrane signaling systems. The protein is Guanine nucleotide-binding protein alpha-8 subunit (gpa-8) of Caenorhabditis elegans.